A 305-amino-acid chain; its full sequence is RNA-binding protein with serine-rich domain 1 (305 aa).

Residues 1-10 (MDLSGVKKKS) show a composition bias toward basic residues. A necessary for interaction with SRP54, nuclear localization and exon-skipping region spans residues 1–161 (MDLSGVKKKS…KRRSPSPKPT (161 aa)). The segment at 1–170 (MDLSGVKKKS…TKVHIGRLTR (170 aa)) is disordered. The tract at residues 1 to 220 (MDLSGVKKKS…ENPDEAEKAL (220 aa)) is necessary for interaction with the cleaved p110 isoform of CDC2L1. Glycyl lysine isopeptide (Lys-Gly) (interchain with G-Cter in SUMO2) cross-links involve residues lysine 7 and lysine 15. Positions 33–59 (DRSDEKSKDRSKDKGATKESSEKDRGR) are enriched in basic and acidic residues. A Phosphoserine; by CK2 modification is found at serine 53. A compositionally biased stretch (low complexity) spans 68-126 (ASSGSSSTRSRSSSTSSSGSSTSTGSSSGSSSSSASSRSGSSSTSRSSSSSSSSGSPSP). Positions 69–121 (SSGSSSTRSRSSSTSSSGSSTSTGSSSGSSSSSASSRSGSSSTSRSSSSSSSS) are necessary for interactions with UPF2 and UPF3B and UPF2-dependent NMD. Composition is skewed to basic residues over residues 127–143 (SRRR…KSKP) and 151–167 (RKRR…HIGR). Residues serine 155 and serine 157 each carry the phosphoserine modification. Residues 156-242 (PSPKPTKVHI…ITATAVLAPW (87 aa)) are necessary for interaction with PNN and exon-skipping. The tract at residues 159–244 (KPTKVHIGRL…ATAVLAPWPR (86 aa)) is interaction with SAP18 and ACIN1. A Phosphothreonine modification is found at threonine 161. The RRM domain occupies 161–240 (TKVHIGRLTR…QEITATAVLA (80 aa)). N6-acetyllysine is present on lysine 218. Residues 238 to 305 (VLAPWPRPPP…RSRSSSNSSR (68 aa)) are necessary for interaction with TRA2B, nuclear localization and exon-skipping. The tract at residues 240–305 (APWPRPPPRR…RSRSSSNSSR (66 aa)) is disordered. A compositionally biased stretch (pro residues) spans 242-262 (WPRPPPRRFSPPRRMLPPPPM). Basic residues predominate over residues 266 to 298 (SPPRMRRRSRSPRRRSPVRRRSRSPGRRRHRSR).

This sequence belongs to the splicing factor SR family. In terms of assembly, found in mRNA splicing-dependent exon junction complexes (EJC). Found in a post-splicing complex with NXF1, RBM8A, UPF1, UPF2, UPF3A, UPF3B and RNPS1. Component of the heterotrimeric ASAP (apoptosis- and splicing-associated protein) and PSAP complexes consisting of RNPS1, SAP18 and either ACIN1 or PNN, respectively; the ASAP and PSAP complexes probably are formed mutually exclusive. Component of the active spliceosome. Associates with polysomes. Interacts with the cleaved p110 isoform of CDC2L1, CSNK2A1, PNN, SART3, SRP54, SRRM1 and TRA2B/SFRS10. Post-translationally, phosphorylated on one or more of the four Ser/Thr residues (Ser-43, Thr-49, Ser-52 or Ser-53). Ser-53 phosphorylation site is important for splicing and translation stimulation activity in vitro. As to expression, ubiquitous.

Its subcellular location is the nucleus. The protein localises to the nucleus speckle. The protein resides in the cytoplasm. Part of pre- and post-splicing multiprotein mRNP complexes. Auxiliary component of the splicing-dependent multiprotein exon junction complex (EJC) deposited at splice junction on mRNAs. The EJC is a dynamic structure consisting of core proteins and several peripheral nuclear and cytoplasmic associated factors that join the complex only transiently either during EJC assembly or during subsequent mRNA metabolism. Component of the ASAP and PSAP complexes which bind RNA in a sequence-independent manner and are proposed to be recruited to the EJC prior to or during the splicing process and to regulate specific excision of introns in specific transcription subsets. The ASAP complex can inhibit RNA processing during in vitro splicing reactions. The ASAP complex promotes apoptosis and is disassembled after induction of apoptosis. Enhances the formation of the ATP-dependent A complex of the spliceosome. Involved in both constitutive splicing and, in association with SRP54 and TRA2B/SFRS10, in distinctive modulation of alternative splicing in a substrate-dependent manner. Involved in the splicing modulation of BCL2L1/Bcl-X (and probably other apoptotic genes); specifically inhibits formation of proapoptotic isoforms such as Bcl-X(S); the activity is different from the established EJC assembly and function. Participates in mRNA 3'-end cleavage. Involved in UPF2-dependent nonsense-mediated decay (NMD) of mRNAs containing premature stop codons. Also mediates increase of mRNA abundance and translational efficiency. Binds spliced mRNA 20-25 nt upstream of exon-exon junctions. In Homo sapiens (Human), this protein is RNA-binding protein with serine-rich domain 1 (RNPS1).